The chain runs to 1154 residues: DNA-directed RNA polymerase subunit beta' (1154 aa).

Residues cysteine 60, cysteine 62, cysteine 75, and cysteine 78 each contribute to the Zn(2+) site. Residues aspartate 449, aspartate 451, and aspartate 453 each contribute to the Mg(2+) site. Residues cysteine 774, cysteine 848, cysteine 855, and cysteine 858 each contribute to the Zn(2+) site.

The protein belongs to the RNA polymerase beta' chain family. The RNAP catalytic core consists of 2 alpha, 1 beta, 1 beta' and 1 omega subunit. When a sigma factor is associated with the core the holoenzyme is formed, which can initiate transcription. Mg(2+) is required as a cofactor. Zn(2+) serves as cofactor.

It catalyses the reaction RNA(n) + a ribonucleoside 5'-triphosphate = RNA(n+1) + diphosphate. DNA-dependent RNA polymerase catalyzes the transcription of DNA into RNA using the four ribonucleoside triphosphates as substrates. The chain is DNA-directed RNA polymerase subunit beta' from Desulforudis audaxviator (strain MP104C).